We begin with the raw amino-acid sequence, 479 residues long: Ribosomal RNA small subunit methyltransferase F (479 aa).

S-adenosyl-L-methionine is bound by residues 125–131 (AAAPGSK), Glu149, Asp176, and Asp194. Cys247 serves as the catalytic Nucleophile.

It belongs to the class I-like SAM-binding methyltransferase superfamily. RsmB/NOP family.

It localises to the cytoplasm. The enzyme catalyses cytidine(1407) in 16S rRNA + S-adenosyl-L-methionine = 5-methylcytidine(1407) in 16S rRNA + S-adenosyl-L-homocysteine + H(+). In terms of biological role, specifically methylates the cytosine at position 1407 (m5C1407) of 16S rRNA. This chain is Ribosomal RNA small subunit methyltransferase F, found in Escherichia coli O127:H6 (strain E2348/69 / EPEC).